The chain runs to 114 residues: Macrophage migration inhibitory factor homolog (114 aa).

Residue Pro-2 is the Proton acceptor; via imino nitrogen of the active site. The substrate site is built by Lys-33 and Asn-98.

It belongs to the MIF family.

The protein resides in the secreted. The catalysed reaction is L-dopachrome = 5,6-dihydroxyindole-2-carboxylate. It catalyses the reaction 3-phenylpyruvate = enol-phenylpyruvate. Functionally, tautomerization of the methyl ester of L-dopachrome. Inhibits migration of human peripheral blood mononuclear cells. The protein is Macrophage migration inhibitory factor homolog of Trichuris trichiura (Whipworm).